We begin with the raw amino-acid sequence, 301 residues long: tRNA dimethylallyltransferase (301 aa).

Residue 12 to 19 (GPTAVGKT) participates in ATP binding. Residue 14–19 (TAVGKT) coordinates substrate. Residues 37–40 (DSQQ) form an interaction with substrate tRNA region.

This sequence belongs to the IPP transferase family. Monomer. Mg(2+) is required as a cofactor.

The enzyme catalyses adenosine(37) in tRNA + dimethylallyl diphosphate = N(6)-dimethylallyladenosine(37) in tRNA + diphosphate. Catalyzes the transfer of a dimethylallyl group onto the adenine at position 37 in tRNAs that read codons beginning with uridine, leading to the formation of N6-(dimethylallyl)adenosine (i(6)A). The chain is tRNA dimethylallyltransferase from Streptococcus uberis (strain ATCC BAA-854 / 0140J).